A 592-amino-acid polypeptide reads, in one-letter code: E3 ubiquitin-protein ligase RNF180 (592 aa).

Over 1-564 the chain is Cytoplasmic; it reads MKRSEESTST…DSRGWWFDMD (564 aa). S231 is subject to Phosphoserine. The tract at residues 282–489 is interaction with ZIC2; the sequence is QSPPSFDPNM…VFLQTELNNA (208 aa). An RING-type zinc finger spans residues 432–474; it reads CAVCLDVYFNPYMCYPCHHIFCEPCLRTLAKDNPASTPCPLCR. A helical transmembrane segment spans residues 565–585; sequence MVIIYIYSVNWVIGFVVFCFL. The Extracellular segment spans residues 586-592; sequence CYFFFPF.

In terms of assembly, interacts with ZIC2. In terms of tissue distribution, brain, kidney, testis and uterus. membrane protein. Nucleus envelope.

The protein resides in the endoplasmic reticulum membrane. It is found in the nucleus envelope. It catalyses the reaction S-ubiquitinyl-[E2 ubiquitin-conjugating enzyme]-L-cysteine + [acceptor protein]-L-lysine = [E2 ubiquitin-conjugating enzyme]-L-cysteine + N(6)-ubiquitinyl-[acceptor protein]-L-lysine.. It participates in protein modification; protein ubiquitination. In terms of biological role, E3 ubiquitin-protein ligase which promotes polyubiquitination and degradation by the proteasome pathway of ZIC2. In Mus musculus (Mouse), this protein is E3 ubiquitin-protein ligase RNF180 (Rnf180).